Reading from the N-terminus, the 276-residue chain is N-alpha-acetyltransferase 60 (276 aa).

One can recognise an N-acetyltransferase domain in the interval 34-239 (VQLRFLVPDD…WTLLDHIKHY (206 aa)). Substrate is bound at residue tyrosine 59. The active site involves tyrosine 139. Position 141 (leucine 141) interacts with substrate. Residues 143–145 (LGV) and 151–156 (RNGIGS) each bind acetyl-CoA. Histidine 180 is a catalytic residue. Acetyl-CoA is bound by residues asparagine 185 and 192–195 (YEKR). Residues 204–215 (PYYYNIRGKGKD) form a required for homodimerization region. Tyrosine 207 contacts substrate.

This sequence belongs to the acetyltransferase family. NAA60 subfamily.

The catalysed reaction is N-terminal L-methionyl-[transmembrane protein] + acetyl-CoA = N-terminal N(alpha)-acetyl-L-methionyl-[transmembrane protein] + CoA + H(+). It carries out the reaction L-lysyl-[protein] + acetyl-CoA = N(6)-acetyl-L-lysyl-[protein] + CoA + H(+). In terms of biological role, displays alpha (N-terminal) acetyltransferase activity towards a range of N-terminal sequences including those starting with Met-Lys, Met-Val, Met-Ala and Met-Met. Required for normal chromosomal segregation during anaphase. Its function is as follows. Shows histone acetyltransferase activity toward free histones. Does not show histone acetyltransferase activity toward free histones. The polypeptide is N-alpha-acetyltransferase 60 (Drosophila melanogaster (Fruit fly)).